The chain runs to 591 residues: V-type ATP synthase alpha chain (591 aa).

An ATP-binding site is contributed by 233 to 240; it reads GPFGAGKT.

Belongs to the ATPase alpha/beta chains family.

It carries out the reaction ATP + H2O + 4 H(+)(in) = ADP + phosphate + 5 H(+)(out). Functionally, produces ATP from ADP in the presence of a proton gradient across the membrane. The V-type alpha chain is a catalytic subunit. The sequence is that of V-type ATP synthase alpha chain from Streptococcus pneumoniae serotype 19F (strain G54).